Reading from the N-terminus, the 825-residue chain is Hypoxia-inducible factor 1-alpha (825 aa).

Positions 1 to 30 (MEGAGGENEKKKMSSERRKEKSRDAARSRR) are disordered. The interval 1 to 401 (MEGAGGENEK…KEPDALTLLA (401 aa)) is interaction with TSGA10. Positions 7-30 (ENEKKKMSSERRKEKSRDAARSRR) are enriched in basic and acidic residues. Residues 17 to 70 (RRKEKSRDAARSRRSKESEVFYELAHQLPLPHNVSSHLDKASVMRLTISYLRVR) enclose the bHLH domain. The segment at 21 to 30 (KSRDAARSRR) is DNA-binding. A PAS 1 domain is found at 85–158 (KAQMNCFYLK…THRNGPVRKG (74 aa)). The interval 170 to 191 (RMKCTLTSRGRTMNIKSATWKV) is required for heterodimer formation with ARNT. The PAS 2 domain occupies 228–298 (PHPSNIEIPL…KTHHDMFTKG (71 aa)). Serine 247 is subject to Phosphoserine; by CK1. The region spanning 302 to 345 (TGQYRMLAKRGGYVWVETQATVIYNTKDSQPQCIVCVNYVVSGI) is the PAC domain. The segment at 401 to 602 (APAAGDTIIS…STVTGFQQTQ (202 aa)) is ODD. Proline 402 bears the 4-hydroxyproline mark. Polar residues predominate over residues 492 to 516 (QIQDQPASPSDGSTRQSSPEPNSPS). Residues 492-520 (QIQDQPASPSDGSTRQSSPEPNSPSEYCF) form a disordered region. The tract at residues 530-574 (FKLELVEKLFAEDTEAKNPFSAQDTDLDLEMLAPYIPMDDDFQLR) is NTAD. N6-acetyllysine; alternate is present on lysine 531. A Glycyl lysine isopeptide (Lys-Gly) (interchain with G-Cter in ubiquitin); alternate cross-link involves residue lysine 531. Residues lysine 537 and lysine 546 each participate in a glycyl lysine isopeptide (Lys-Gly) (interchain with G-Cter in ubiquitin) cross-link. Serine 550 bears the Phosphoserine; by GSK3-beta mark. Threonine 554 bears the Phosphothreonine; by GSK3-beta mark. Position 563 is a 4-hydroxyproline (proline 563). Serine 575 carries the post-translational modification Phosphoserine; by PLK3. The segment at 575 to 784 (SFDQLSPLES…SDLACRLLGQ (210 aa)) is ID. Disordered regions lie at residues 579–602 (LSPLESNSPSPPSVSTVTGFQQTQ) and 654–674 (AKASAYSGTHSRTASPDRAGK). Residue serine 588 is modified to Phosphoserine; by GSK3-beta. Residues 654–667 (AKASAYSGTHSRTA) are compositionally biased toward polar residues. Serine 657 bears the Phosphoserine; by PLK3 mark. A Nuclear localization signal motif is present at residues 717–721 (RKRKM). Residues 785–825 (SMDESGLPQLTSYDCEVNAPIQGSRNLLQGEELLRALDQVN) form a CTAD region. An S-nitrosocysteine modification is found at cysteine 799. Asparagine 802 carries the (3S)-3-hydroxyasparagine modification.

Interacts with the ARNT; forms a heterodimer that binds core DNA sequence 5'-TACGTG-3' within the hypoxia response element (HRE) of target gene promoters. Interacts with COPS5; the interaction increases the transcriptional activity of HIF1A through increased stability. Interacts with EP300 (via TAZ-type 1 domains); the interaction is stimulated in response to hypoxia and inhibited by CITED2. Interacts with CREBBP (via TAZ-type 1 domains). Interacts with NCOA1, NCOA2, APEX1 and HSP90. Interacts (hydroxylated within the ODD domain) with VHLL (via beta domain); the interaction, leads to polyubiquitination and subsequent HIF1A proteasomal degradation. During hypoxia, sumoylated HIF1A also binds VHL; the interaction promotes the ubiquitination of HIF1A. Interacts with SENP1; the interaction desumoylates HIF1A resulting in stabilization and activation of transcription. Interacts (via the ODD domain) with NAA10; the interaction appears not to acetylate HIF1A nor have any affect on protein stability, during hypoxia. Interacts with RWDD3; the interaction enhances HIF1A sumoylation. Interacts with TSGA10. Interacts with HIF3A. Interacts with RORA (via the DNA binding domain); the interaction enhances HIF1A transcription under hypoxia through increasing protein stability. Interaction with PSMA7 inhibits the transactivation activity of HIF1A under both normoxic and hypoxia-mimicking conditions. Interacts with USP20. Interacts with RACK1; promotes HIF1A ubiquitination and proteasome-mediated degradation. Interacts (via N-terminus) with USP19. Interacts with SIRT2. Interacts (deacetylated form) with EGLN1. Interacts with CBFA2T3. Interacts with HSP90AA1 and HSP90AB1. Interacts with DCUN1D1; this interaction increases the interaction between VHL and DCUN1D1. Interacts with HIF1AN. S-nitrosylation of Cys-799 may be responsible for increased recruitment of p300 coactivator necessary for transcriptional activity of HIF-1 complex. Post-translationally, acetylation of Lys-531 by ARD1 increases interaction with VHL and stimulates subsequent proteasomal degradation. Deacetylated by SIRT2 increases its interaction with and hydroxylation by EGLN1 thereby inactivating HIF1A activity by inducing its proteasomal degradation. In terms of processing, ubiquitinated; in normoxia, following hydroxylation and interaction with VHL. Lys-531 appears to be the principal site of ubiquitination. Clioquinol, the Cu/Zn-chelator, inhibits ubiquitination through preventing hydroxylation at Asn-802. Ubiquitinated by E3 ligase VHL. Deubiquitinated by UCHL1. Requires phosphorylation for DNA-binding. Phosphorylation at Ser-247 by CSNK1D/CK1 represses kinase activity and impairs ARNT binding. Phosphorylation by GSK3-beta and PLK3 promote degradation by the proteasome. Post-translationally, the iron and 2-oxoglutarate dependent 3-hydroxylation of asparagine is (S) stereospecific within HIF CTAD domains. In terms of processing, sumoylated; with SUMO1 under hypoxia. Sumoylation is enhanced through interaction with RWDD3. Both sumoylation and desumoylation seem to be involved in the regulation of its stability during hypoxia. Sumoylation can promote either its stabilization or its VHL-dependent degradation by promoting hydroxyproline-independent HIF1A-VHL complex binding, thus leading to HIF1A ubiquitination and proteasomal degradation. Desumoylation by SENP1 increases its stability amd transcriptional activity. There is a disaccord between various publications on the effect of sumoylation and desumoylation on its stability and transcriptional activity. In normoxia, is hydroxylated on Pro-402 and Pro-563 in the oxygen-dependent degradation domain (ODD) by EGLN1/PHD2 and EGLN2/PHD1. EGLN3/PHD3 has also been shown to hydroxylate Pro-563. The hydroxylated prolines promote interaction with VHL, initiating rapid ubiquitination and subsequent proteasomal degradation. Deubiquitinated by USP20. Under hypoxia, proline hydroxylation is impaired and ubiquitination is attenuated, resulting in stabilization. In normoxia, is hydroxylated on Asn-802 by HIF1AN, thus abrogating interaction with CREBBP and EP300 and preventing transcriptional activation. Repressed by iron ion, via Fe(2+) prolyl hydroxylase (PHD) enzymes-mediated hydroxylation and subsequent proteasomal degradation. Expressed in the kidney, higher expression is seen in the renal medulla than in the cortex. Expressed also in the perivenous zone of the liver.

It localises to the cytoplasm. Its subcellular location is the nucleus. The protein localises to the nucleus speckle. Its activity is regulated as follows. Induced by reactive oxygen species (ROS). In terms of biological role, functions as a master transcriptional regulator of the adaptive response to hypoxia. Under hypoxic conditions, activates the transcription of over 40 genes, including erythropoietin, glucose transporters, glycolytic enzymes, vascular endothelial growth factor, HILPDA, and other genes whose protein products increase oxygen delivery or facilitate metabolic adaptation to hypoxia. Plays an essential role in embryonic vascularization, tumor angiogenesis and pathophysiology of ischemic disease. Heterodimerizes with ARNT; heterodimer binds to core DNA sequence 5'-TACGTG-3' within the hypoxia response element (HRE) of target gene promoters. Activation requires recruitment of transcriptional coactivators such as CREBBP and EP300. Activity is enhanced by interaction with NCOA1 and/or NCOA2. Interaction with redox regulatory protein APEX1 seems to activate CTAD and potentiates activation by NCOA1 and CREBBP. Involved in the axonal distribution and transport of mitochondria in neurons during hypoxia. This chain is Hypoxia-inducible factor 1-alpha (Hif1a), found in Rattus norvegicus (Rat).